A 313-amino-acid polypeptide reads, in one-letter code: Formimidoylglutamase (313 aa).

Residues His-130, Asp-155, His-157, Asp-159, Asp-241, and Asp-243 each contribute to the Mn(2+) site.

It belongs to the arginase family. It depends on Mn(2+) as a cofactor.

It catalyses the reaction N-formimidoyl-L-glutamate + H2O = formamide + L-glutamate. It participates in amino-acid degradation; L-histidine degradation into L-glutamate; L-glutamate from N-formimidoyl-L-glutamate (hydrolase route): step 1/1. Its function is as follows. Catalyzes the conversion of N-formimidoyl-L-glutamate to L-glutamate and formamide. In Salmonella paratyphi A (strain ATCC 9150 / SARB42), this protein is Formimidoylglutamase.